A 689-amino-acid chain; its full sequence is tRNA 5-methylaminomethyl-2-thiouridine biosynthesis bifunctional protein MnmC (689 aa).

Positions 1–245 are tRNA (mnm(5)s(2)U34)-methyltransferase; that stretch reads MNQRPIQTAT…KREMLTGTLP (245 aa). The FAD-dependent cmnm(5)s(2)U34 oxidoreductase stretch occupies residues 270-689; the sequence is IGGGIVSALT…RSPATQESSR (420 aa).

This sequence in the N-terminal section; belongs to the methyltransferase superfamily. tRNA (mnm(5)s(2)U34)-methyltransferase family. The protein in the C-terminal section; belongs to the DAO family. FAD is required as a cofactor.

It localises to the cytoplasm. The catalysed reaction is 5-aminomethyl-2-thiouridine(34) in tRNA + S-adenosyl-L-methionine = 5-methylaminomethyl-2-thiouridine(34) in tRNA + S-adenosyl-L-homocysteine + H(+). Catalyzes the last two steps in the biosynthesis of 5-methylaminomethyl-2-thiouridine (mnm(5)s(2)U) at the wobble position (U34) in tRNA. Catalyzes the FAD-dependent demodification of cmnm(5)s(2)U34 to nm(5)s(2)U34, followed by the transfer of a methyl group from S-adenosyl-L-methionine to nm(5)s(2)U34, to form mnm(5)s(2)U34. This Yersinia pestis protein is tRNA 5-methylaminomethyl-2-thiouridine biosynthesis bifunctional protein MnmC.